We begin with the raw amino-acid sequence, 145 residues long: Bacilliredoxin SERP1075 (145 aa).

Belongs to the bacilliredoxin family.

This chain is Bacilliredoxin SERP1075, found in Staphylococcus epidermidis (strain ATCC 35984 / DSM 28319 / BCRC 17069 / CCUG 31568 / BM 3577 / RP62A).